The chain runs to 279 residues: Protein phosphatase 1 regulatory subunit 3E (279 aa).

Phosphoserine is present on residues Ser16 and Ser33. The disordered stretch occupies residues 28–89 (RSQRPSLEEE…RSPDTRKRVR (62 aa)). A compositionally biased stretch (basic residues) spans 51-65 (ARSRAHVPGRGRRAR). Phosphoserine is present on Ser66. The PP1-binding motif signature appears at 87–90 (RVRF). The CBM21 domain maps to 154 to 259 (AARLQAQRIC…NNGGRDYALL (106 aa)). The tract at residues 176–198 (GSARVLDLAYEKRVSVRWSADGW) is glycogen-binding motif. The segment at 248–256 (WDNNGGRDY) is substrate-binding motif.

As to expression, expressed in liver and heart, with low levels in skeletal muscle.

Its function is as follows. Acts as a glycogen-targeting subunit for PP1. PP1 is involved in glycogen metabolism and contributes to the activation of glycogen synthase leading to an increase in glycogen synthesis. The polypeptide is Protein phosphatase 1 regulatory subunit 3E (Ppp1r3e) (Rattus norvegicus (Rat)).